Here is a 217-residue protein sequence, read N- to C-terminus: Probable cytidylate kinase (217 aa).

9–17 is a binding site for ATP; it reads GPAGSGKST.

Belongs to the cytidylate kinase family. Type 1 subfamily.

The enzyme catalyses CMP + ATP = CDP + ADP. It catalyses the reaction dCMP + ATP = dCDP + ADP. The polypeptide is Probable cytidylate kinase (Vairimorpha ceranae (strain BRL01) (Microsporidian parasite)).